The following is a 424-amino-acid chain: UPF0597 protein Shewmr7_2876 (424 aa).

The protein belongs to the UPF0597 family.

This chain is UPF0597 protein Shewmr7_2876, found in Shewanella sp. (strain MR-7).